The sequence spans 448 residues: Zinc finger and BTB domain-containing protein 14 (448 aa).

The BTB domain occupies 36–102 (CDIAIVVEDV…MYTAKISVKK (67 aa)). The Nuclear localization signal signature appears at 50-66 (HRCVLAACSTYFKKLFK). Residues 130 to 193 (VSSPEENTQS…QEDGKSPTTT (64 aa)) are disordered. The segment covering 156-167 (DTQDDEVEEIGD) has biased composition (acidic residues). C2H2-type zinc fingers lie at residues 275–302 (IVCQ…ADRP), 303–330 (FVCE…GYKP), 331–358 (YSCE…NERP), 359–386 (FACH…GEKP), and 387–415 (FVCG…ERKQ). A compositionally biased stretch (basic and acidic residues) spans 404-415 (RHENNMHSERKQ). The interval 404–425 (RHENNMHSERKQVTTANSIQSE) is disordered. The span at 416–425 (VTTANSIQSE) shows a compositional bias: polar residues.

The protein belongs to the krueppel C2H2-type zinc-finger protein family. In terms of assembly, interacts with ZBTB21.

It is found in the nucleus. In terms of biological role, transcriptional activator of the dopamine transporter (DAT), binding it's promoter at the consensus sequence 5'-CCTGCACAGTTCACGGA-3'. Binds to 5'-d(GCC)(n)-3' trinucleotide repeats in promoter regions and acts as a repressor of the FMR1 gene. Transcriptional repressor of MYC and thymidine kinase promoters. The protein is Zinc finger and BTB domain-containing protein 14 (ZBTB14) of Gallus gallus (Chicken).